We begin with the raw amino-acid sequence, 710 residues long: Amyloid beta precursor protein binding family B member 1 (710 aa).

Position 135 is a phosphoserine (S135). Disordered stretches follow at residues 143 to 256 and 276 to 300; these read EQGP…SDLP and GTTQWEPPGRASPSQGSSPQEESQL. The span at 145–173 shows a compositional bias: acidic residues; that stretch reads GPDEGEEKAAGEAEEDDEDEEEEEEEEDL. K204 carries the post-translational modification N6-acetyllysine. The span at 223-234 shows a compositional bias: polar residues; the sequence is SWATLSQGSPSY. In terms of domain architecture, WW spans 253–285; the sequence is SDLPAGWMRVQDTSGTYYWHIPTGTTQWEPPGR. A compositionally biased stretch (low complexity) spans 287-299; it reads SPSQGSSPQEESQ. Positions 370 to 509 constitute a PID 1 domain; the sequence is FAVRSLGWVE…SKIMSERRNA (140 aa). The residue at position 459 (S459) is a Phosphoserine; by PKC. S517 carries the post-translational modification Phosphoserine. The region spanning 542–699 is the PID 2 domain; that stretch reads KFQVYYLGNV…RRGVQSLWGS (158 aa). A Phosphotyrosine; by ABL1 modification is found at Y547. Phosphoserine; by SGK1 is present on S610. K701 carries the N6-acetyllysine modification.

Component of a complex, at least composed of APBB1, RASD1/DEXRAS1 and APP. Interacts (via PID domain 2) with APP (with the intracellular domain of the amyloid-beta precursor protein). Interacts (via PID domain 2) with RASD1/DEXRAS1; impairs the transcription activation activity. Interacts (via PID domain 1) with KAT5/TIP60. Interacts (via the WW domain) with the proline-rich region of APBB1IP. Interacts with TSHZ1 and TSHZ2. Interacts (via the WW domain) with histone H2AX (when phosphorylated on 'Tyr-142') and the proline-rich region of ENAH. Interacts with MAPK8. Interacts (via PID domain 1) with TSHZ3 (via homeobox domain). Interacts with SET. Found in a trimeric complex with HDAC1 and TSHZ3; the interaction between HDAC1 and APBB1 is mediated by TSHZ3. Interacts (via WWW domain) with NEK6. Interacts (via WWW domain) with ABL1. Interacts with RNF157. Interacts with ARF6. Polyubiquitination by RNF157 leads to degradation by the proteasome. Post-translationally, phosphorylation at Ser-610 by SGK1 promotes its localization to the nucleus. Phosphorylated following nuclear translocation. Phosphorylation at Tyr-546 by ABL1 enhances transcriptional activation activity and reduces the affinity for RASD1/DEXRAS1. In terms of processing, acetylation at Lys-204 and Lys-701 by KAT5 promotes its transcription activator activity. Phosphorylated at Ser-459 by PKC upon insulin activation. As to expression, expressed in the brain, retinal lens and muscle cells (at protein level).

The protein localises to the cell membrane. It is found in the cytoplasm. Its subcellular location is the nucleus. The protein resides in the cell projection. It localises to the growth cone. The protein localises to the nucleus speckle. Functionally, transcription coregulator that can have both coactivator and corepressor functions. Adapter protein that forms a transcriptionally active complex with the gamma-secretase-derived amyloid precursor protein (APP) intracellular domain. Plays a central role in the response to DNA damage by translocating to the nucleus and inducing apoptosis. May act by specifically recognizing and binding histone H2AX phosphorylated on 'Tyr-142' (H2AXY142ph) at double-strand breaks (DSBs), recruiting other pro-apoptosis factors such as MAPK8/JNK1. Required for histone H4 acetylation at double-strand breaks (DSBs). Its ability to specifically bind modified histones and chromatin modifying enzymes such as KAT5/TIP60, probably explains its transcription activation activity. Functions in association with TSHZ3, SET and HDAC factors as a transcriptional repressor, that inhibits the expression of CASP4. Associates with chromatin in a region surrounding the CASP4 transcriptional start site(s). Involved in hippocampal neurite branching and neuromuscular junction formation, as a result plays a role in spatial memory functioning. Plays a role in the maintenance of lens transparency. May play a role in muscle cell strength. Acts as a molecular adapter that functions in neurite outgrowth by activating the RAC1-ARF6 axis upon insulin treatment. This Mus musculus (Mouse) protein is Amyloid beta precursor protein binding family B member 1.